The following is a 407-amino-acid chain: Phosphonoacetate hydrolase (407 aa).

Zn(2+) is bound by residues D25, T64, D202, H206, D241, H242, and H368. Residues T64 and D202 each coordinate substrate. H242 and H368 together coordinate substrate.

It belongs to the alkaline phosphatase family. PhnA subfamily. In terms of assembly, homodimer. Requires Zn(2+) as cofactor.

It carries out the reaction phosphonoacetate + H2O = acetate + phosphate + H(+). In terms of biological role, specifically hydrolyzes phosphonoacetate. Does not have activity on other organophosphonates or acetates. This chain is Phosphonoacetate hydrolase, found in Pseudomonas cedrina.